Consider the following 372-residue polypeptide: NAD(P)H-quinone oxidoreductase subunit 1 (372 aa).

A run of 8 helical transmembrane segments spans residues 27–47 (LLWL…GVLV), 97–117 (LLFT…WLII), 128–148 (VGIG…GLLM), 176–196 (LALA…IDIV), 204–224 (FLSW…ICAL), 270–290 (LLVS…ELIA), 308–328 (SLGI…AILL), and 351–371 (ISLV…FAFG).

This sequence belongs to the complex I subunit 1 family. NDH-1 is composed of at least 11 different subunits.

The protein resides in the cellular thylakoid membrane. It carries out the reaction a plastoquinone + NADH + (n+1) H(+)(in) = a plastoquinol + NAD(+) + n H(+)(out). It catalyses the reaction a plastoquinone + NADPH + (n+1) H(+)(in) = a plastoquinol + NADP(+) + n H(+)(out). Its function is as follows. NDH-1 shuttles electrons from an unknown electron donor, via FMN and iron-sulfur (Fe-S) centers, to quinones in the respiratory and/or the photosynthetic chain. The immediate electron acceptor for the enzyme in this species is believed to be plastoquinone. Couples the redox reaction to proton translocation, and thus conserves the redox energy in a proton gradient. This chain is NAD(P)H-quinone oxidoreductase subunit 1, found in Prochlorococcus marinus (strain SARG / CCMP1375 / SS120).